A 747-amino-acid chain; its full sequence is Eukaryotic translation initiation factor 3 subunit B (747 aa).

In terms of domain architecture, RRM spans 42–128; sequence AFVVVDGLPE…HTLRVNKLTD (87 aa). WD repeat units lie at residues 195–234, 236–292, 310–349, 520–563, and 578–623; these read DRQHWTETFVQWSPLGTYLTSVHAQGVQLWGGPSWTRQRR, AHPF…PLRS, APKFPWPAFKWSADDKYVARLNPGQSISVYELPRMNLLDK, LEKK…EKPE, and ADHY…LREE.

Belongs to the eIF-3 subunit B family. Component of the eukaryotic translation initiation factor 3 (eIF-3) complex.

It is found in the cytoplasm. RNA-binding component of the eukaryotic translation initiation factor 3 (eIF-3) complex, which is involved in protein synthesis of a specialized repertoire of mRNAs and, together with other initiation factors, stimulates binding of mRNA and methionyl-tRNAi to the 40S ribosome. The eIF-3 complex specifically targets and initiates translation of a subset of mRNAs involved in cell proliferation. The protein is Eukaryotic translation initiation factor 3 subunit B (prt-1) of Neurospora crassa (strain ATCC 24698 / 74-OR23-1A / CBS 708.71 / DSM 1257 / FGSC 987).